We begin with the raw amino-acid sequence, 291 residues long: Formamidopyrimidine-DNA glycosylase (291 aa).

P2 acts as the Schiff-base intermediate with DNA in catalysis. E3 (proton donor) is an active-site residue. K58 acts as the Proton donor; for beta-elimination activity in catalysis. DNA contacts are provided by H100, R123, and K166. The FPG-type zinc finger occupies 257–291 (SVYGREGKECSRCGMHIVRIVQSGRSSFYCPQCQK). The active-site Proton donor; for delta-elimination activity is the R281.

It belongs to the FPG family. Monomer. Zn(2+) is required as a cofactor.

The enzyme catalyses Hydrolysis of DNA containing ring-opened 7-methylguanine residues, releasing 2,6-diamino-4-hydroxy-5-(N-methyl)formamidopyrimidine.. It catalyses the reaction 2'-deoxyribonucleotide-(2'-deoxyribose 5'-phosphate)-2'-deoxyribonucleotide-DNA = a 3'-end 2'-deoxyribonucleotide-(2,3-dehydro-2,3-deoxyribose 5'-phosphate)-DNA + a 5'-end 5'-phospho-2'-deoxyribonucleoside-DNA + H(+). Its function is as follows. Involved in base excision repair of DNA damaged by oxidation or by mutagenic agents. Acts as a DNA glycosylase that recognizes and removes damaged bases. Has a preference for oxidized purines, such as 7,8-dihydro-8-oxoguanine (8-oxoG). Has AP (apurinic/apyrimidinic) lyase activity and introduces nicks in the DNA strand. Cleaves the DNA backbone by beta-delta elimination to generate a single-strand break at the site of the removed base with both 3'- and 5'-phosphates. The protein is Formamidopyrimidine-DNA glycosylase of Bartonella bacilliformis (strain ATCC 35685 / KC583 / Herrer 020/F12,63).